We begin with the raw amino-acid sequence, 413 residues long: Serine hydroxymethyltransferase (413 aa).

(6S)-5,6,7,8-tetrahydrofolate contacts are provided by residues leucine 119 and 123–125 (GHL). Lysine 228 is modified (N6-(pyridoxal phosphate)lysine). A (6S)-5,6,7,8-tetrahydrofolate-binding site is contributed by 351-353 (SPF).

Belongs to the SHMT family. As to quaternary structure, homodimer. Pyridoxal 5'-phosphate is required as a cofactor.

The protein localises to the cytoplasm. It catalyses the reaction (6R)-5,10-methylene-5,6,7,8-tetrahydrofolate + glycine + H2O = (6S)-5,6,7,8-tetrahydrofolate + L-serine. It functions in the pathway one-carbon metabolism; tetrahydrofolate interconversion. Its pathway is amino-acid biosynthesis; glycine biosynthesis; glycine from L-serine: step 1/1. Functionally, catalyzes the reversible interconversion of serine and glycine with tetrahydrofolate (THF) serving as the one-carbon carrier. This reaction serves as the major source of one-carbon groups required for the biosynthesis of purines, thymidylate, methionine, and other important biomolecules. Also exhibits THF-independent aldolase activity toward beta-hydroxyamino acids, producing glycine and aldehydes, via a retro-aldol mechanism. The protein is Serine hydroxymethyltransferase of Lysinibacillus sphaericus (strain C3-41).